The primary structure comprises 103 residues: Glutaredoxin-C1 (103 aa).

One can recognise a Glutaredoxin domain in the interval 1–102 (MDRVNRLAAQ…PLLRNAGALW (102 aa)). An intrachain disulfide couples Cys21 to Cys24.

This sequence belongs to the glutaredoxin family. CC-type subfamily.

It is found in the cytoplasm. In terms of biological role, has a glutathione-disulfide oxidoreductase activity in the presence of NADPH and glutathione reductase. Reduces low molecular weight disulfides and proteins. The chain is Glutaredoxin-C1 (GRXC1) from Oryza sativa subsp. japonica (Rice).